A 968-amino-acid polypeptide reads, in one-letter code: MSDRTSASSSSRRTKQNYDAIGSFVIDQEIGKGSFAKVYLGRHKVTGALVAVKSVELARLNKKLKENLYGEIQILKTLRHPHIVALHDCVESSTHINLIMEYCELGDLSLFIKKRDKLITNPYTHDLARKYPVYPNAGLNEVVTRHFLKQLASALQFLRAGDFVHRDVKPQNLLLLPSPHMMANNKTAKHIMSGSYDSFTPAAGLASAPMLKLADFGFARVLPSTSLAETLCGSPLYMAPEILRYEKYDAKADLWSVGTVLYEMVTGRPPFKASNHVELLRKIESSGDVIKFTRESVVSQEMKGLIRALLKKNPVERISFEDLFNHPVVTEPIPGLVEDDIPKPPRRRSLKEERPVSRAEDSLVPSRKQSLRKDLADREGAPQTAGPSSPKPRRSSPLATPNEPVEISKPNYFQIPPREDRLSYSPRKEAADGLGIKRPQVQPSTSAPTRPSSYVDRRHRSSNASLRAPVREANPPPNDVTRTKPRGMGTKPMTEEERAAQDIAFERDYVLVDKKHLEVNALADQISMYPQQPQSPKSAQIVRRATQQGSPTSTSGAVPSPPSRALQLAQGHSRQGSYDKALGTSPSKATSVISKAIQDASLRLFGFKYAPHLLSKGPSPVPMYNPFPTYPAPNTPTGLISDGKQGTPVDEDSRVAQCIEDHATRSDVVYGFAEVKYKQLVPLAPSMDHGLGGAPIEKSAEEDGLTAEAIVSLSEEALVLYVKALTLLAKSMDIASLWWSRKNKVESTNSITSAARDSANSEALALRINGAVQWIRSRFNEVLEKAEIVRLKLAEAQKRLPEDHPSHPNNHANDSTALNSLSTVGVFLSEGISAERLMYDRAIEMSRAAAINEIANEDLPGCEISYITAIRMLEAVLDQDDDHLPKRKVSGASKEEKTGANELSDEMNNEDKQVVQNVINMVNNRLTVLRKKLRLIESASKAQQQEEQKQQNLMRRRSGEMTSRSVPA.

The Protein kinase domain occupies 24–329 (FVIDQEIGKG…FEDLFNHPVV (306 aa)). ATP-binding positions include 30–38 (IGKGSFAKV) and K53. D167 acts as the Proton acceptor in catalysis. 4 disordered regions span residues 334–500 (PGLV…ERAA), 528–585 (MYPQ…LGTS), 884–906 (LPKR…LSDE), and 939–968 (ASKA…SVPA). Basic and acidic residues-rich tracts occupy residues 350 to 361 (LKEERPVSRAED), 371 to 380 (LRKDLADREG), and 417 to 431 (PRED…KEAA). Composition is skewed to polar residues over residues 441–452 (VQPSTSAPTRPS), 528–538 (MYPQQPQSPKS), and 545–557 (ATQQ…TSGA).

This sequence belongs to the protein kinase superfamily. Ser/Thr protein kinase family. APG1/unc-51/ULK1 subfamily. In terms of assembly, homodimer. Forms a ternary complex with ATG13 and ATG17.

It is found in the cytoplasm. Its subcellular location is the preautophagosomal structure membrane. It catalyses the reaction L-seryl-[protein] + ATP = O-phospho-L-seryl-[protein] + ADP + H(+). The enzyme catalyses L-threonyl-[protein] + ATP = O-phospho-L-threonyl-[protein] + ADP + H(+). Its function is as follows. Serine/threonine protein kinase involved in the cytoplasm to vacuole transport (Cvt) and found to be essential in autophagy, where it is required for the formation of autophagosomes. Involved in the clearance of protein aggregates which cannot be efficiently cleared by the proteasome. Required for selective autophagic degradation of the nucleus (nucleophagy) as well as for mitophagy which contributes to regulate mitochondrial quantity and quality by eliminating the mitochondria to a basal level to fulfill cellular energy requirements and preventing excess ROS production. Also involved in endoplasmic reticulum-specific autophagic process, in selective removal of ER-associated degradation (ERAD) substrates. Plays a key role in ATG9 and ATG23 cycling through the pre-autophagosomal structure and is necessary to promote ATG18 binding to ATG9 through phosphorylation of ATG9. Catalyzes phosphorylation of ATG4, decreasing the interaction between ATG4 and ATG8 and impairing deconjugation of PE-conjugated forms of ATG8. The chain is Serine/threonine-protein kinase apg-1 from Neurospora crassa (strain ATCC 24698 / 74-OR23-1A / CBS 708.71 / DSM 1257 / FGSC 987).